Here is a 229-residue protein sequence, read N- to C-terminus: NAD(P)H-quinone oxidoreductase subunit K, chloroplastic (229 aa).

[4Fe-4S] cluster contacts are provided by cysteine 43, cysteine 44, cysteine 108, and cysteine 139.

This sequence belongs to the complex I 20 kDa subunit family. In terms of assembly, NDH is composed of at least 16 different subunits, 5 of which are encoded in the nucleus. Requires [4Fe-4S] cluster as cofactor.

It is found in the plastid. Its subcellular location is the chloroplast thylakoid membrane. It catalyses the reaction a plastoquinone + NADH + (n+1) H(+)(in) = a plastoquinol + NAD(+) + n H(+)(out). The enzyme catalyses a plastoquinone + NADPH + (n+1) H(+)(in) = a plastoquinol + NADP(+) + n H(+)(out). Functionally, NDH shuttles electrons from NAD(P)H:plastoquinone, via FMN and iron-sulfur (Fe-S) centers, to quinones in the photosynthetic chain and possibly in a chloroplast respiratory chain. The immediate electron acceptor for the enzyme in this species is believed to be plastoquinone. Couples the redox reaction to proton translocation, and thus conserves the redox energy in a proton gradient. This is NAD(P)H-quinone oxidoreductase subunit K, chloroplastic from Aethionema cordifolium (Lebanon stonecress).